The chain runs to 112 residues: Cytochrome c 2.1 (112 aa).

Heme c-binding residues include Cys20, Cys23, His24, and Met85.

It belongs to the cytochrome c family. In terms of processing, binds 1 heme c group covalently per subunit.

It localises to the mitochondrion intermembrane space. In terms of biological role, electron carrier protein. The oxidized form of the cytochrome c heme group can accept an electron from the heme group of the cytochrome c1 subunit of cytochrome reductase. Cytochrome c then transfers this electron to the cytochrome oxidase complex, the final protein carrier in the mitochondrial electron-transport chain. The sequence is that of Cytochrome c 2.1 from Caenorhabditis briggsae.